A 254-amino-acid polypeptide reads, in one-letter code: Coproheme decarboxylase (254 aa).

Fe-coproporphyrin III-binding positions include R136, 150–154, H177, Q190, and S228; that span reads YPMDK. Y150 is an active-site residue.

Belongs to the ChdC family. Type 1 subfamily. Fe-coproporphyrin III serves as cofactor.

It catalyses the reaction Fe-coproporphyrin III + 2 H2O2 + 2 H(+) = heme b + 2 CO2 + 4 H2O. The enzyme catalyses Fe-coproporphyrin III + H2O2 + H(+) = harderoheme III + CO2 + 2 H2O. The catalysed reaction is harderoheme III + H2O2 + H(+) = heme b + CO2 + 2 H2O. It functions in the pathway porphyrin-containing compound metabolism; protoheme biosynthesis. Its function is as follows. Involved in coproporphyrin-dependent heme b biosynthesis. Catalyzes the decarboxylation of Fe-coproporphyrin III (coproheme) to heme b (protoheme IX), the last step of the pathway. The reaction occurs in a stepwise manner with a three-propionate intermediate. This is Coproheme decarboxylase from Bacillus licheniformis (strain ATCC 14580 / DSM 13 / JCM 2505 / CCUG 7422 / NBRC 12200 / NCIMB 9375 / NCTC 10341 / NRRL NRS-1264 / Gibson 46).